The sequence spans 341 residues: Glyceraldehyde-3-phosphate dehydrogenase 4 (341 aa).

NAD(+)-binding positions include 13–14 (RI), D35, and K85. Residues 157–159 (SCT), T188, 217–218 (TG), and R240 each bind D-glyceraldehyde 3-phosphate. Catalysis depends on C158, which acts as the Nucleophile. N322 is a binding site for NAD(+).

It belongs to the glyceraldehyde-3-phosphate dehydrogenase family. Homotetramer.

Its subcellular location is the cytoplasm. The enzyme catalyses D-glyceraldehyde 3-phosphate + phosphate + NAD(+) = (2R)-3-phospho-glyceroyl phosphate + NADH + H(+). It functions in the pathway carbohydrate degradation; glycolysis; pyruvate from D-glyceraldehyde 3-phosphate: step 1/5. The chain is Glyceraldehyde-3-phosphate dehydrogenase 4 (gpd-4) from Caenorhabditis elegans.